The chain runs to 447 residues: Enolase (447 aa).

A (2R)-2-phosphoglycerate-binding site is contributed by glutamine 168. Glutamate 210 acts as the Proton donor in catalysis. Mg(2+)-binding residues include aspartate 247, glutamate 292, and aspartate 319. (2R)-2-phosphoglycerate-binding residues include lysine 344, arginine 373, serine 374, and lysine 395. The active-site Proton acceptor is the lysine 344.

It belongs to the enolase family. Component of the RNA degradosome, a multiprotein complex involved in RNA processing and mRNA degradation. Mg(2+) is required as a cofactor.

Its subcellular location is the cytoplasm. It is found in the secreted. The protein localises to the cell surface. The catalysed reaction is (2R)-2-phosphoglycerate = phosphoenolpyruvate + H2O. Its pathway is carbohydrate degradation; glycolysis; pyruvate from D-glyceraldehyde 3-phosphate: step 4/5. Its function is as follows. Catalyzes the reversible conversion of 2-phosphoglycerate (2-PG) into phosphoenolpyruvate (PEP). It is essential for the degradation of carbohydrates via glycolysis. This chain is Enolase, found in Blochmanniella floridana.